The primary structure comprises 189 residues: Protein jagunal homolog (189 aa).

Over M1–S34 the chain is Cytoplasmic. A helical membrane pass occupies residues I35 to G55. Topologically, residues S56–A78 are lumenal. The chain crosses the membrane as a helical span at residues Y79–F99. Topologically, residues Q100 to K105 are cytoplasmic. A helical membrane pass occupies residues I106 to L126. Over G127 to G150 the chain is Lumenal. The helical transmembrane segment at I151 to F171 threads the bilayer. Residues S172–D189 are Cytoplasmic-facing.

This sequence belongs to the jagunal family.

It localises to the endoplasmic reticulum membrane. In Caenorhabditis elegans, this protein is Protein jagunal homolog.